The following is a 299-amino-acid chain: Capsid protein (299 aa).

The segment at 1–46 (MPPKVAPESSDAVSSQEQPQRPPPATPPVPTPPPGRREEVGDRAED) is disordered. The segment covering 20-34 (QRPPPATPPVPTPPP) has biased composition (pro residues). Residues 35-46 (GRREEVGDRAED) are compositionally biased toward basic and acidic residues.

The protein belongs to the potexviruses coat protein family.

The protein resides in the virion. Required for genome encapsidation. Forms ribonucleoprotein complexes along with TGB1 helicase and viral RNA. The sequence is that of Capsid protein from Helenium virus S (HelVS).